We begin with the raw amino-acid sequence, 400 residues long: Subtilisin-like protease CPC735_013700 (400 aa).

A signal peptide spans 1 to 19 (MGFVKILSLSLAATAVADA). Residues 20-116 (ATILSPRYPN…IEPNQIVTIS (97 aa)) constitute a propeptide that is removed on maturation. Residues 36–115 (YIVVMKDGVS…FIEPNQIVTI (80 aa)) enclose the Inhibitor I9 domain. The Peptidase S8 domain occupies 126-400 (SWGLPRISVK…RKLLYNNSGK (275 aa)). Catalysis depends on charge relay system residues Asp161 and His192. Residue Asn252 is glycosylated (N-linked (GlcNAc...) asparagine). Ser346 (charge relay system) is an active-site residue. The N-linked (GlcNAc...) asparagine glycan is linked to Asn396.

Belongs to the peptidase S8 family.

The protein resides in the secreted. Secreted subtilisin-like serine protease with keratinolytic activity that contributes to pathogenicity. The chain is Subtilisin-like protease CPC735_013700 from Coccidioides posadasii (strain C735) (Valley fever fungus).